Here is a 599-residue protein sequence, read N- to C-terminus: Beta-(1--&gt;2)glucan export ATP-binding/permease protein NdvA (599 aa).

The ABC transmembrane type-1 domain occupies 21–311; that stretch reads GWILAVANLL…VVNFINNVLM (291 aa). The next 6 membrane-spanning stretches (helical) occupy residues 22–42, 68–88, 146–166, 168–188, 254–274, and 276–296; these read WILA…PILF, LLGA…LVAL, EHFA…YINW, LAIL…LVVH, VITR…GIYL, and QQGL…TLLI. The ABC transporter domain maps to 345 to 579; the sequence is VEFQNVSFSY…GGAFAQLARA (235 aa). 378–385 lines the ATP pocket; the sequence is GATGAGKS.

Belongs to the ABC transporter superfamily. Beta-(1--&gt;2)glucan exporter (TC 3.A.1.108.1) family. As to quaternary structure, homodimer.

Its subcellular location is the cell inner membrane. It carries out the reaction [(1-&gt;2)-beta-D-glucosyl](n)(in) + ATP + H2O = [(1-&gt;2)-beta-D-glucosyl](n)(out) + ADP + phosphate + H(+). In terms of biological role, involved in beta-(1--&gt;2)glucan export. Transmembrane domains (TMD) form a pore in the inner membrane and the ATP-binding domain (NBD) is responsible for energy generation. In Rhodopseudomonas palustris (strain ATCC BAA-98 / CGA009), this protein is Beta-(1--&gt;2)glucan export ATP-binding/permease protein NdvA.